Consider the following 412-residue polypeptide: MIIVNKEDCIRCGACQGTCPTAAIEVTPEDVIYCDICGGEPKCVDICPTGALKLEDLVVDEAGNTQGRIVFNPDKCNECGDCVEVCPPQILKLDEGKVKKVPLQGFCVMCQKCVDICPVGVIGVEGIKEPAKVELEIEGPIFIADCVGCGMCVPECPVDAITLDKVGGVIEIDEDTCIKCGVCAQTCPWNAVYISGRKPEKRAKEIKKFELDEDACIGCNTCVEACPGDFIVPRTSNLTVELPAICTACGLCEQLCPVDAIDLEVELGPAKPASEEGLVWDEEKCDFIGACANICPNDAIRVVTKEGMKVPDNEKVDEEPSFAMCTRCGACTVACPKGALSLVDMDKVVDGEVVKRKRVQYNPALCDQCGDCIEACPYDMLKLTDEKVPLKGFCILCDQCIPACPKGALSLK.

12 4Fe-4S ferredoxin-type domains span residues 2 to 29 (IIVN…VTPE), 30 to 57 (DVIY…LEDL), 67 to 96 (GRIV…LDEG), 97 to 127 (KVKK…VEGI), 138 to 166 (EGPI…LDKV), 168 to 197 (GVIE…ISGR), 207 to 236 (KKFE…PRTS), 238 to 266 (LTVE…LEVE), 276 to 305 (EGLV…VVTK), 314 to 345 (EKVD…LVDM), 357 to 386 (KRVQ…LTDE), and 385 to 412 (DEKV…LSLK). [4Fe-4S] cluster-binding residues include Cys9, Cys12, Cys15, and Cys19. [4Fe-4S] cluster contacts are provided by Cys76, Cys79, Cys82, Cys86, Cys107, Cys110, Cys113, Cys117, Cys146, Cys149, Cys152, Cys156, Cys177, Cys180, Cys183, Cys187, Cys216, Cys219, Cys222, Cys226, Cys246, Cys249, Cys252, and Cys256. [4Fe-4S] cluster contacts are provided by Cys325, Cys328, Cys331, Cys335, Cys366, Cys369, Cys372, Cys376, Cys394, Cys397, Cys400, and Cys404.

It depends on [4Fe-4S] cluster as a cofactor.

This chain is Polyferredoxin protein MvhB (mvhB), found in Methanothermobacter thermautotrophicus (strain ATCC 29096 / DSM 1053 / JCM 10044 / NBRC 100330 / Delta H) (Methanobacterium thermoautotrophicum).